A 316-amino-acid chain; its full sequence is Transaldolase 2 (316 aa).

Lysine 131 (schiff-base intermediate with substrate) is an active-site residue.

Belongs to the transaldolase family. Type 1 subfamily. In terms of assembly, homodimer.

The protein localises to the cytoplasm. It carries out the reaction D-sedoheptulose 7-phosphate + D-glyceraldehyde 3-phosphate = D-erythrose 4-phosphate + beta-D-fructose 6-phosphate. It functions in the pathway carbohydrate degradation; pentose phosphate pathway; D-glyceraldehyde 3-phosphate and beta-D-fructose 6-phosphate from D-ribose 5-phosphate and D-xylulose 5-phosphate (non-oxidative stage): step 2/3. Its function is as follows. Transaldolase is important for the balance of metabolites in the pentose-phosphate pathway. The sequence is that of Transaldolase 2 from Shigella sonnei (strain Ss046).